The primary structure comprises 374 residues: Translocating chain-associated membrane protein 1 (374 aa).

The Cytoplasmic segment spans residues 2-29 (AIRKKSTKSPPVLSHEFILQNHADIVSC). The helical transmembrane segment at 30–50 (VAMVFLLGLMFEITAKASIIF) threads the bilayer. At 51-76 (VTLQYNVTLPATEEQATESTSLYYYG) the chain is on the lumenal side. The N-linked (GlcNAc...) asparagine glycan is linked to N56. The helical transmembrane segment at 77–97 (IKDLATVFFYMLVAIIIHAII) threads the bilayer. Residues 98–121 (QEYVLDKINRRMHFSKTKHSKFNE) lie on the Cytoplasmic side of the membrane. Residues 117-326 (SKFNESGQLS…NFQLRRWREH (210 aa)) enclose the TLC domain. A helical membrane pass occupies residues 122 to 142 (SGQLSAFYLFSCIWGTFILIS). Residues 143–159 (ENYISDPTILWRAYPHN) lie on the Lumenal side of the membrane. The helical transmembrane segment at 160–180 (LMTFQMKFFYIAQLAYWFHAF) threads the bilayer. The Cytoplasmic portion of the chain corresponds to 181 to 192 (PELYFQKTKKED). The helical transmembrane segment at 193-213 (IPRQLVYIGLYLFHIAGAYLL) threads the bilayer. At 214–217 (NLNH) the chain is on the lumenal side. The chain crosses the membrane as a helical span at residues 218–238 (LGLVLLVLHYFVEFLFHISRL). Over 239–251 (FYFSDEKYQKGFS) the chain is Cytoplasmic. Residues 252 to 272 (LWAVLFVLGRLLTLILSVLTV) traverse the membrane as a helical segment. The Lumenal portion of the chain corresponds to 273–297 (GFGLARAENQKLDFSAGNFNVLAVR). Residues 298–318 (IAVLASICITQAFMMWKFINF) traverse the membrane as a helical segment. Residues 319-374 (QLRRWREHSTFQAPVVKKKPTVTKGRSSRKGTENGVNGTVTSNGADSPRNRKEKSS) are Cytoplasmic-facing. Residues 334–347 (VKKKPTVTKGRSSR) are compositionally biased toward basic residues. The disordered stretch occupies residues 334–374 (VKKKPTVTKGRSSRKGTENGVNGTVTSNGADSPRNRKEKSS). Polar residues predominate over residues 352–363 (NGVNGTVTSNGA). At S365 the chain carries Phosphoserine.

This sequence belongs to the TRAM family. In terms of assembly, interacts with SEC61B. May interact with Derlin-1/DERL1. In terms of processing, N-glycosylated.

Its subcellular location is the endoplasmic reticulum membrane. Involved in the translocation of nascent protein chains into or through the endoplasmic reticulum (ER) membrane by facilitating the proper chain positioning at the SEC61 channel. Regulates the exposure of nascent secretory protein chain to the cytosol during translocation into the ER. May affect the phospholipid bilayer in the vicinity of the lateral gate of the SEC61 channel, thereby facilitating ER protein transport. Intimately associates with transmembrane (TM) domain of nascent membrane proteins during the entire integration process into the ER membrane. Associates with the second TM domain of G-protein-coupled receptor opsin/OPSD nascent chain in the ER membrane, which may facilitate its integration into the membrane. Under conditions of ER stress, participates in the disposal of misfolded ER membrane proteins during the unfolded protein response (UPR), an integrated stress response (ISR) pathway, by selectively retrotranslocating misfolded ER-membrane proteins from the ER into the cytosol where they are ubiquitinated and degraded by the proteasome. The protein is Translocating chain-associated membrane protein 1 (TRAM1) of Canis lupus familiaris (Dog).